The chain runs to 380 residues: Transcription factor SOX-7 (380 aa).

The interval 24–43 (SDGLSPPAVPRPSGDKSSES) is disordered. Residues 45-113 (IRRPMNAFMV…QHMQDYPNYK (69 aa)) constitute a DNA-binding region (HMG box). The disordered stretch occupies residues 139-167 (SRDQNTLPEKNGIGRGEKEDRGEYSPGAT). The 121-residue stretch at 260-380 (VSMMSSVSGC…ATYYNSYSVS (121 aa)) folds into the Sox C-terminal domain. The tract at residues 323–328 (EFDQYL) is required for beta-catenin-binding.

Interacts with CTNNB1/beta-catenin; this interaction may lead to the proteasomal degradation of active CTNNB1 and thus inhibition of Wnt/beta-catenin-stimulated transcription. As to expression, predominantly expressed in ovary, lung and heart. In the ovary, restricted to oocytes (at protein level). Present both in mesenchymal and epithelial cells in some adult tissues, including ear.

The protein localises to the nucleus. It localises to the cytoplasm. Binds to and activates the CDH5 promoter, hence plays a role in the transcriptional regulation of genes expressed in the hemogenic endothelium and blocks further differentiation into blood precursors. May be required for the survival of both hematopoietic and endothelial precursors during specification. May play a role in skeletal myogenesis and up-regulate the expression of muscle markers, such as PAX3/PAX7 and Meox1. Competes with GATA4 for binding and activation of the FGF3 promoter. Represses Wnt/beta-catenin-stimulated transcription. Probably acts by targeting CTNNB1 to proteasomal degradation. Binds the DNA sequence 5'-AACAAT-3'. This chain is Transcription factor SOX-7 (Sox7), found in Mus musculus (Mouse).